Reading from the N-terminus, the 102-residue chain is Aspartyl/glutamyl-tRNA(Asn/Gln) amidotransferase subunit C (102 aa).

This sequence belongs to the GatC family. Heterotrimer of A, B and C subunits.

The enzyme catalyses L-glutamyl-tRNA(Gln) + L-glutamine + ATP + H2O = L-glutaminyl-tRNA(Gln) + L-glutamate + ADP + phosphate + H(+). The catalysed reaction is L-aspartyl-tRNA(Asn) + L-glutamine + ATP + H2O = L-asparaginyl-tRNA(Asn) + L-glutamate + ADP + phosphate + 2 H(+). Its function is as follows. Allows the formation of correctly charged Asn-tRNA(Asn) or Gln-tRNA(Gln) through the transamidation of misacylated Asp-tRNA(Asn) or Glu-tRNA(Gln) in organisms which lack either or both of asparaginyl-tRNA or glutaminyl-tRNA synthetases. The reaction takes place in the presence of glutamine and ATP through an activated phospho-Asp-tRNA(Asn) or phospho-Glu-tRNA(Gln). This is Aspartyl/glutamyl-tRNA(Asn/Gln) amidotransferase subunit C from Bordetella avium (strain 197N).